A 440-amino-acid polypeptide reads, in one-letter code: Amino acid transporter AVT6D (440 aa).

Helical transmembrane passes span 26–46, 47–67, 102–122, 149–169, 182–202, 219–239, 262–282, 309–329, 356–376, 377–397, and 410–430; these read FAGAVFNISTSIVGAGIMAIP, AAFKVLGVIPSLSIIVIIAWL, AVTVVTMVVTFGSMIIFSIII, WNTRFFGLLFIFVFLFLPLVL, ISFLLALLFVVISSVLAIIAL, GGLSFFSLFTASPVIVTAFTF, ISVILCATIYSATGLFCYLLF, IVRLSYAIHLMLVFPLLNFSL, FPLLISCFLGAIAIPDIWYFF, QFLGSTSTVSIAFIFPAAIVL, and IVASVMLVLAVATSIIAISTN.

Belongs to the amino acid/polyamine transporter 2 family. Amino acid/auxin permease (AAAP) (TC 2.A.18.6) subfamily.

The protein localises to the membrane. The protein is Amino acid transporter AVT6D of Arabidopsis thaliana (Mouse-ear cress).